We begin with the raw amino-acid sequence, 311 residues long: Meteorin-like protein (311 aa).

The span at 1 to 13 shows a compositional bias: low complexity; sequence MRGAARAAWGRAG. Residues 1 to 24 form a disordered region; that stretch reads MRGAARAAWGRAGQPWPRPPAPGP. The first 45 residues, 1–45, serve as a signal peptide directing secretion; it reads MRGAARAAWGRAGQPWPRPPAPGPPPPPLPLLLLLLAGLLGGAGA. 5 disulfides stabilise this stretch: C52–C75, C107–C143, C188–C260, C191–C284, and C201–C306.

Belongs to the meteorin family. In terms of tissue distribution, highly expressed in the skeletal muscle, in subcutaneous adipose tissue, epididymal white adipose tissue depots and heart. Also expressed in brown adipose tissues and kidney.

Its subcellular location is the secreted. Hormone induced following exercise or cold exposure that promotes energy expenditure. Induced either in the skeletal muscle after exercise or in adipose tissue following cold exposure and is present in the circulation. Able to stimulate energy expenditure associated with the browning of the white fat depots and improves glucose tolerance. Does not promote an increase in a thermogenic gene program via direct action on adipocytes, but acts by stimulating several immune cell subtypes to enter the adipose tissue and activate their prothermogenic actions. Stimulates an eosinophil-dependent increase in IL4 expression and promotes alternative activation of adipose tissue macrophages, which are required for the increased expression of the thermogenic and anti-inflammatory gene programs in fat. Required for some cold-induced thermogenic responses, suggesting a role in metabolic adaptations to cold temperatures. The chain is Meteorin-like protein (METRNL) from Homo sapiens (Human).